Consider the following 318-residue polypeptide: Nucleotide-binding protein Lcho_3490 (318 aa).

35–42 (GISGGGKS) contributes to the ATP binding site. 84-87 (DVRN) provides a ligand contact to GTP.

It belongs to the RapZ-like family.

In terms of biological role, displays ATPase and GTPase activities. This chain is Nucleotide-binding protein Lcho_3490, found in Leptothrix cholodnii (strain ATCC 51168 / LMG 8142 / SP-6) (Leptothrix discophora (strain SP-6)).